The following is a 332-amino-acid chain: Glycerol-3-phosphate dehydrogenase [NAD(P)+] (332 aa).

Trp-13, Lys-34, and Lys-108 together coordinate NADPH. The sn-glycerol 3-phosphate site is built by Lys-108, Gly-136, and Ser-138. Ala-140 contacts NADPH. Lys-191, Asp-244, Ser-254, Arg-255, and Asn-256 together coordinate sn-glycerol 3-phosphate. Lys-191 (proton acceptor) is an active-site residue. Arg-255 provides a ligand contact to NADPH. Residues Val-279 and Glu-281 each coordinate NADPH.

Belongs to the NAD-dependent glycerol-3-phosphate dehydrogenase family.

It is found in the cytoplasm. The enzyme catalyses sn-glycerol 3-phosphate + NAD(+) = dihydroxyacetone phosphate + NADH + H(+). The catalysed reaction is sn-glycerol 3-phosphate + NADP(+) = dihydroxyacetone phosphate + NADPH + H(+). It participates in membrane lipid metabolism; glycerophospholipid metabolism. Functionally, catalyzes the reduction of the glycolytic intermediate dihydroxyacetone phosphate (DHAP) to sn-glycerol 3-phosphate (G3P), the key precursor for phospholipid synthesis. This Francisella tularensis subsp. holarctica (strain FTNF002-00 / FTA) protein is Glycerol-3-phosphate dehydrogenase [NAD(P)+].